The primary structure comprises 142 residues: U1 small nuclear ribonucleoprotein C (142 aa).

Residues 4–36 (YYCDYCDTFLTHDSPSVRKTHNGGRKHKDNVRM) form a Matrin-type zinc finger.

This sequence belongs to the U1 small nuclear ribonucleoprotein C family. In terms of assembly, U1 snRNP is composed of the 7 core Sm proteins B/B', D1, D2, D3, E, F and G that assemble in a heptameric protein ring on the Sm site of the small nuclear RNA to form the core snRNP, and at least 3 U1 snRNP-specific proteins U1-70K, U1-A and U1-C. U1-C interacts with U1 snRNA and the 5' splice-site region of the pre-mRNA.

Its subcellular location is the nucleus. Its function is as follows. Component of the spliceosomal U1 snRNP, which is essential for recognition of the pre-mRNA 5' splice-site and the subsequent assembly of the spliceosome. U1-C is directly involved in initial 5' splice-site recognition for both constitutive and regulated alternative splicing. The interaction with the 5' splice-site seems to precede base-pairing between the pre-mRNA and the U1 snRNA. Stimulates commitment or early (E) complex formation by stabilizing the base pairing of the 5' end of the U1 snRNA and the 5' splice-site region. The polypeptide is U1 small nuclear ribonucleoprotein C (Caenorhabditis elegans).